Consider the following 549-residue polypeptide: DDB1- and CUL4-associated factor 11 (549 aa).

The segment covering 1-24 (MGSRNSSSAGSGSLEPSEGLSRRG) has biased composition (low complexity). A disordered region spans residues 1 to 40 (MGSRNSSSAGSGSLEPSEGLSRRGAGLRRSEEEEEEDEDV). A phosphoserine mark is found at Ser73 and Ser75. Residues 80-89 (DSAWDGRLGD) are compositionally biased toward basic and acidic residues. Residues 80–100 (DSAWDGRLGDRYNPPVDATPD) are disordered. WD repeat units lie at residues 170–210 (TYSQ…HKFK), 216–258 (DVGW…TALD), 263–302 (ERRF…RTLQ), 305–345 (SHED…EDDP), 353–392 (GHQD…SREG), 435–480 (GVLH…KKLT), and 481–520 (NHKA…YFQD).

In terms of assembly, interacts with DDB1 and CUL4A.

The protein operates within protein modification; protein ubiquitination. Its function is as follows. May function as a substrate receptor for CUL4-DDB1 E3 ubiquitin-protein ligase complex. This chain is DDB1- and CUL4-associated factor 11 (Dcaf11), found in Rattus norvegicus (Rat).